The primary structure comprises 79 residues: VDRPFKEVEANEGYRLSIDLAEQTLTTPGGETFTFDITEHRKHCLLNGLDEIGLTLQHADKIKAFEEKRRQSQPWLFNG.

Belongs to the LeuD family. LeuD type 1 subfamily. In terms of assembly, heterodimer of LeuC and LeuD.

The enzyme catalyses (2R,3S)-3-isopropylmalate = (2S)-2-isopropylmalate. The protein operates within amino-acid biosynthesis; L-leucine biosynthesis; L-leucine from 3-methyl-2-oxobutanoate: step 2/4. Functionally, catalyzes the isomerization between 2-isopropylmalate and 3-isopropylmalate, via the formation of 2-isopropylmaleate. The polypeptide is 3-isopropylmalate dehydratase small subunit (leuD) (Neisseria gonorrhoeae).